The sequence spans 250 residues: Probable transcriptional regulatory protein Rxyl_1318 (250 aa).

The protein belongs to the TACO1 family.

The protein resides in the cytoplasm. The polypeptide is Probable transcriptional regulatory protein Rxyl_1318 (Rubrobacter xylanophilus (strain DSM 9941 / JCM 11954 / NBRC 16129 / PRD-1)).